Here is a 102-residue protein sequence, read N- to C-terminus: Small ribosomal subunit protein eS24 (102 aa).

It belongs to the eukaryotic ribosomal protein eS24 family.

The chain is Small ribosomal subunit protein eS24 from Methanococcus aeolicus (strain ATCC BAA-1280 / DSM 17508 / OCM 812 / Nankai-3).